The primary structure comprises 140 residues: Nucleoside diphosphate kinase (140 aa).

6 residues coordinate ATP: Lys-11, Phe-59, Arg-87, Thr-93, Arg-104, and Asn-114. The Pros-phosphohistidine intermediate role is filled by His-117.

This sequence belongs to the NDK family. As to quaternary structure, homotetramer. Mg(2+) is required as a cofactor.

The protein localises to the cytoplasm. It carries out the reaction a 2'-deoxyribonucleoside 5'-diphosphate + ATP = a 2'-deoxyribonucleoside 5'-triphosphate + ADP. The enzyme catalyses a ribonucleoside 5'-diphosphate + ATP = a ribonucleoside 5'-triphosphate + ADP. In terms of biological role, major role in the synthesis of nucleoside triphosphates other than ATP. The ATP gamma phosphate is transferred to the NDP beta phosphate via a ping-pong mechanism, using a phosphorylated active-site intermediate. The polypeptide is Nucleoside diphosphate kinase (Rhodospirillum centenum (strain ATCC 51521 / SW)).